Here is a 507-residue protein sequence, read N- to C-terminus: Putative UDP-glucuronosyltransferase ugt-60 (507 aa).

The N-terminal stretch at 1-15 is a signal peptide; the sequence is MYLPIFCIFLSVVDS. N-linked (GlcNAc...) asparagine glycosylation occurs at Asn312. Residues 379–399 form a helical membrane-spanning segment; the sequence is YNSFLEAAQAGIPAVLMPLFA.

It belongs to the UDP-glycosyltransferase family.

It localises to the membrane. The enzyme catalyses glucuronate acceptor + UDP-alpha-D-glucuronate = acceptor beta-D-glucuronoside + UDP + H(+). The polypeptide is Putative UDP-glucuronosyltransferase ugt-60 (ugt-60) (Caenorhabditis elegans).